Reading from the N-terminus, the 335-residue chain is Tetraacyldisaccharide 4'-kinase (335 aa).

58-65 contacts ATP; it reads TVGGVGKT.

The protein belongs to the LpxK family.

It carries out the reaction a lipid A disaccharide + ATP = a lipid IVA + ADP + H(+). Its pathway is glycolipid biosynthesis; lipid IV(A) biosynthesis; lipid IV(A) from (3R)-3-hydroxytetradecanoyl-[acyl-carrier-protein] and UDP-N-acetyl-alpha-D-glucosamine: step 6/6. Transfers the gamma-phosphate of ATP to the 4'-position of a tetraacyldisaccharide 1-phosphate intermediate (termed DS-1-P) to form tetraacyldisaccharide 1,4'-bis-phosphate (lipid IVA). The chain is Tetraacyldisaccharide 4'-kinase from Caulobacter sp. (strain K31).